Reading from the N-terminus, the 710-residue chain is Low-temperature-induced 78 kDa protein (710 aa).

Disordered stretches follow at residues 1–198, 225–269, and 305–507; these read MDQT…LDGQ, YQSK…RDLS, and GFGD…STYT. The segment covering 14–25 has biased composition (basic and acidic residues); that stretch reads QHPEEVEHHENG. Positions 29–41 are enriched in basic residues; it reads MFRKVKARAKKFK. Basic and acidic residues predominate over residues 49–58; that stretch reads QSNEHEQDHD. Residues 59-73 are compositionally biased toward acidic residues; sequence LVEEDDDDDELEPEV. Residues 138–168 show a composition bias toward basic and acidic residues; it reads SDKEEKRDVPIHHPLSELSDREESRETHHES. Polar residues predominate over residues 169–187; sequence LNTPVSLLSGTEDVTSTFA. 5 consecutive repeat copies span residues 303-316, 317-331, 336-350, 357-370, and 398-412. Residues 303 to 370 form a 2 X 14 AA repeats of P-[MV]-G-F-G-[DS]-E-S-G-A-E-L-E-K region; it reads PVGFGDESGA…GSESGAELEK (68 aa). Basic and acidic residues-rich tracts occupy residues 313–331, 340–352, 367–380, 402–418, 442–466, and 475–487; these read ELEK…KTET, RSHE…ESGN, ELEK…DSGR, RSHE…DKDV, EDKF…KTET, and SHPK…KESR. The segment at 317–412 is 3 X 15 AA repeats of [DN]-[FS]-P-[STV]-R-S-H-[DE]-[FL]-D-[LM]-K-[NT]-E-[ST]; the sequence is DFPTRSHDFD…SHELDLKNES (96 aa). 3 consecutive repeat copies span residues 510–514, 532–536, and 550–554. The tract at residues 510–600 is 5 X 5 AA repeats of [FV]-[ADT]-[EST]-[KM]-L; that stretch reads FASMLGYSGE…AFSDMVAEKL (91 aa). Residues 537 to 577 are disordered; sequence TPVNEKDQETESAVTTKLPISGGGSGVEEQRGEDKSVSGRD. Residues 564–577 show a composition bias toward basic and acidic residues; that stretch reads EEQRGEDKSVSGRD. A run of 2 repeats spans residues 579–583 and 596–600. Residues 601-710 form a disordered region; that stretch reads QIGGEEEKKE…STVVPVQKEL (110 aa). A compositionally biased stretch (basic and acidic residues) spans 605 to 626; sequence EEEKKETTTKEVEKISTEKAAS. A Phosphoserine modification is found at serine 626. Residues 638–654 are compositionally biased toward gly residues; it reads GGGGMVGRIKGWFGGGA. A run of 2 repeats spans residues 648–670 and 674–696. A 2 X 23 AA repeats region spans residues 648–696; it reads GWFGGGATDEVKPESPHSVEEAPKSSGWFGGGATEEVKPKSPHSVEESP. Composition is skewed to basic and acidic residues over residues 656–670 and 682–693; these read DEVK…EEAP and EEVKPKSPHSVE.

The protein belongs to the LTI78/LTI65 family. Accumulates rapidly in leaves, stems, roots, flower petals, filaments, and sepals during cold-acclimation.

It is found in the cytoplasm. Its function is as follows. Involved in responses to abiotic stresses. Regulates probably root elongation in cold conditions. The protein is Low-temperature-induced 78 kDa protein of Arabidopsis thaliana (Mouse-ear cress).